Here is a 555-residue protein sequence, read N- to C-terminus: MALPKNGGNSSSTKKKVSYISVPSQIINSLSSSSLQSLLVSPKKSSRCTNRFSYRNPRIWFLTLFLVSLFGMLKLGLNVDPISLPFSRYPCSTGSFDEHHAVSHLAFASKNDTQSSSSSEHRKNETLPTEGDFWKQPDGLGFKPCLGFSRQYRKDSNSILKNRWKYLLVVVAGGMNQQRNQIVDAVIMARILGASLVVPVLQVNVIWGDESEFADIFDLEHFKNVLADDVHIVSSLPSTHVMTRPAEEKRTPLHASPQWIRAHYLKRINRERVLLLRGLDSRLSNDLPSDLQKLRCKVASQALRFSPRILELGNKLASRMLSEGQYLSLHLRMEKDVWVRTGSLPGLTPEYDEIVNSERQRHPELLTGRSNMTYNERKLAGLCPLTALEVTRLLKALEAPKDARIYWAGGEPLGGKEALEPLTKEFPHLYNKHDLALPGELEPFAKKASVMAAIDYIVCEKSDVFIPSHGGNMGHALQGQRAYAGHKKYITPNKRHMLPYFMNASLPESEFNRIVKDFHRESLGQPELRTGRGGKDVTKHPVSECMCSDRRQQQQ.

The Cytoplasmic portion of the chain corresponds to 1–58; that stretch reads MALPKNGGNSSSTKKKVSYISVPSQIINSLSSSSLQSLLVSPKKSSRCTNRFSYRNPR. The helical; Signal-anchor for type II membrane protein transmembrane segment at 59–79 threads the bilayer; it reads IWFLTLFLVSLFGMLKLGLNV. Residues 80-555 are Lumenal-facing; sequence DPISLPFSRY…MCSDRRQQQQ (476 aa). Residues 110 to 130 are disordered; the sequence is KNDTQSSSSSEHRKNETLPTE. N-linked (GlcNAc...) asparagine glycosylation is found at N111 and N124. 330–332 contacts substrate; the sequence is HLR. N371 and N503 each carry an N-linked (GlcNAc...) asparagine glycan. The disordered stretch occupies residues 525-555; it reads QPELRTGRGGKDVTKHPVSECMCSDRRQQQQ. Over residues 529–555 the composition is skewed to basic and acidic residues; sequence RTGRGGKDVTKHPVSECMCSDRRQQQQ.

The protein belongs to the glycosyltransferase GT106 family. In terms of tissue distribution, highly expressed in embryogenic microspore and in vegetative tissues.

It localises to the golgi apparatus membrane. The protein operates within glycan metabolism. May play a role in the biosynthesis of matrix polysaccharides and contribute to the biomechanics and development of the plant cell wall. The protein is O-fucosyltransferase 20 of Brassica napus (Rape).